A 379-amino-acid polypeptide reads, in one-letter code: tRNA-specific 2-thiouridylase MnmA (379 aa).

Residues 9-16 and Met35 contribute to the ATP site; that span reads AMSGGVDS. The segment at 94-96 is interaction with target base in tRNA; it reads NPD. The Nucleophile role is filled by Cys99. Residues Cys99 and Cys195 are joined by a disulfide bond. Gly123 provides a ligand contact to ATP. An interaction with tRNA region spans residues 145–147; sequence KDQ. The active-site Cysteine persulfide intermediate is the Cys195. Positions 307 to 308 are interaction with tRNA; sequence RY.

Belongs to the MnmA/TRMU family.

It is found in the cytoplasm. The enzyme catalyses S-sulfanyl-L-cysteinyl-[protein] + uridine(34) in tRNA + AH2 + ATP = 2-thiouridine(34) in tRNA + L-cysteinyl-[protein] + A + AMP + diphosphate + H(+). Functionally, catalyzes the 2-thiolation of uridine at the wobble position (U34) of tRNA, leading to the formation of s(2)U34. The protein is tRNA-specific 2-thiouridylase MnmA of Xylella fastidiosa (strain M12).